Here is a 440-residue protein sequence, read N- to C-terminus: tRNA-2-methylthio-N(6)-dimethylallyladenosine synthase (440 aa).

The MTTase N-terminal domain maps to 4–122 (KSYYIITHGC…LPKILERVFE (119 aa)). The [4Fe-4S] cluster site is built by Cys13, Cys49, Cys83, Cys159, Cys163, and Cys166. The Radical SAM core domain maps to 145 to 375 (REPGVRAWVT…IELQNGISLE (231 aa)). The region spanning 378-440 (KNEEGNIHEI…KLFHLEGVLV (63 aa)) is the TRAM domain.

Belongs to the methylthiotransferase family. MiaB subfamily. Monomer. Requires [4Fe-4S] cluster as cofactor.

The protein resides in the cytoplasm. The enzyme catalyses N(6)-dimethylallyladenosine(37) in tRNA + (sulfur carrier)-SH + AH2 + 2 S-adenosyl-L-methionine = 2-methylsulfanyl-N(6)-dimethylallyladenosine(37) in tRNA + (sulfur carrier)-H + 5'-deoxyadenosine + L-methionine + A + S-adenosyl-L-homocysteine + 2 H(+). Catalyzes the methylthiolation of N6-(dimethylallyl)adenosine (i(6)A), leading to the formation of 2-methylthio-N6-(dimethylallyl)adenosine (ms(2)i(6)A) at position 37 in tRNAs that read codons beginning with uridine. The protein is tRNA-2-methylthio-N(6)-dimethylallyladenosine synthase of Carboxydothermus hydrogenoformans (strain ATCC BAA-161 / DSM 6008 / Z-2901).